The chain runs to 154 residues: Myoglobin (154 aa).

One can recognise a Globin domain in the interval 2 to 148 (GLSDGEWQLV…FRKDMASNYK (147 aa)). At Ser-4 the chain carries Phosphoserine. His-65 is a binding site for nitrite. His-65 contributes to the O2 binding site. Residue Thr-68 is modified to Phosphothreonine. Residue His-94 participates in heme b binding.

The protein belongs to the globin family. As to quaternary structure, monomeric.

The protein resides in the cytoplasm. The protein localises to the sarcoplasm. The enzyme catalyses Fe(III)-heme b-[protein] + nitric oxide + H2O = Fe(II)-heme b-[protein] + nitrite + 2 H(+). It catalyses the reaction H2O2 + AH2 = A + 2 H2O. In terms of biological role, monomeric heme protein which primary function is to store oxygen and facilitate its diffusion within muscle tissues. Reversibly binds oxygen through a pentacoordinated heme iron and enables its timely and efficient release as needed during periods of heightened demand. Depending on the oxidative conditions of tissues and cells, and in addition to its ability to bind oxygen, it also has a nitrite reductase activity whereby it regulates the production of bioactive nitric oxide. Under stress conditions, like hypoxia and anoxia, it also protects cells against reactive oxygen species thanks to its pseudoperoxidase activity. The polypeptide is Myoglobin (MB) (Pan troglodytes (Chimpanzee)).